The primary structure comprises 193 residues: dCTP deaminase (193 aa).

DCTP is bound by residues 110-115 (RSSLAR), aspartate 128, 136-138 (VLE), tyrosine 171, lysine 178, and glutamine 182. Residue glutamate 138 is the Proton donor/acceptor of the active site. Residues 169 to 193 (RPYNRRQDAKYKDQQGAVASRIDKD) form a disordered region.

Belongs to the dCTP deaminase family. As to quaternary structure, homotrimer.

It carries out the reaction dCTP + H2O + H(+) = dUTP + NH4(+). Its pathway is pyrimidine metabolism; dUMP biosynthesis; dUMP from dCTP (dUTP route): step 1/2. In terms of biological role, catalyzes the deamination of dCTP to dUTP. This chain is dCTP deaminase, found in Pectobacterium carotovorum subsp. carotovorum (strain PC1).